Consider the following 80-residue polypeptide: Large ribosomal subunit protein uL24 (80 aa).

It belongs to the universal ribosomal protein uL24 family. In terms of assembly, part of the 50S ribosomal subunit.

One of two assembly initiator proteins, it binds directly to the 5'-end of the 23S rRNA, where it nucleates assembly of the 50S subunit. In terms of biological role, one of the proteins that surrounds the polypeptide exit tunnel on the outside of the subunit. In Chlorobium phaeovibrioides (strain DSM 265 / 1930) (Prosthecochloris vibrioformis (strain DSM 265)), this protein is Large ribosomal subunit protein uL24.